A 210-amino-acid chain; its full sequence is Redox-sensing transcriptional repressor Rex (210 aa).

The segment at residues 17-56 is a DNA-binding region (H-T-H motif); the sequence is KYHRYLGDLLDRDIQRISSKELSDIIGFTASQIRQDLNNF. Residue 91–96 participates in NAD(+) binding; sequence GAGNLG.

It belongs to the transcriptional regulatory Rex family. Homodimer.

It is found in the cytoplasm. In terms of biological role, modulates transcription in response to changes in cellular NADH/NAD(+) redox state. In Clostridioides difficile (strain 630) (Peptoclostridium difficile), this protein is Redox-sensing transcriptional repressor Rex.